The chain runs to 295 residues: Aspartate carbamoyltransferase catalytic subunit (295 aa).

Residues R49 and T50 each coordinate carbamoyl phosphate. Residue K77 coordinates L-aspartate. Residues R99, H127, and Q130 each contribute to the carbamoyl phosphate site. Positions 161 and 212 each coordinate L-aspartate. Residues G251 and P252 each contribute to the carbamoyl phosphate site.

This sequence belongs to the aspartate/ornithine carbamoyltransferase superfamily. ATCase family. Heterododecamer (2C3:3R2) of six catalytic PyrB chains organized as two trimers (C3), and six regulatory PyrI chains organized as three dimers (R2).

It catalyses the reaction carbamoyl phosphate + L-aspartate = N-carbamoyl-L-aspartate + phosphate + H(+). The protein operates within pyrimidine metabolism; UMP biosynthesis via de novo pathway; (S)-dihydroorotate from bicarbonate: step 2/3. Its function is as follows. Catalyzes the condensation of carbamoyl phosphate and aspartate to form carbamoyl aspartate and inorganic phosphate, the committed step in the de novo pyrimidine nucleotide biosynthesis pathway. The protein is Aspartate carbamoyltransferase catalytic subunit of Campylobacter jejuni subsp. jejuni serotype O:23/36 (strain 81-176).